Here is a 1394-residue protein sequence, read N- to C-terminus: DNA-directed RNA polymerase subunit beta' (1394 aa).

Zn(2+) contacts are provided by Cys71, Cys73, Cys86, and Cys89. The Mg(2+) site is built by Asp462, Asp464, and Asp466. Cys810, Cys884, Cys891, and Cys894 together coordinate Zn(2+).

This sequence belongs to the RNA polymerase beta' chain family. In terms of assembly, the RNAP catalytic core consists of 2 alpha, 1 beta, 1 beta' and 1 omega subunit. When a sigma factor is associated with the core the holoenzyme is formed, which can initiate transcription. It depends on Mg(2+) as a cofactor. Zn(2+) serves as cofactor.

The catalysed reaction is RNA(n) + a ribonucleoside 5'-triphosphate = RNA(n+1) + diphosphate. Its function is as follows. DNA-dependent RNA polymerase catalyzes the transcription of DNA into RNA using the four ribonucleoside triphosphates as substrates. The sequence is that of DNA-directed RNA polymerase subunit beta' from Caulobacter sp. (strain K31).